The chain runs to 278 residues: MTVLHSVDFFPSGKAPVAIEPRLPQAAFPEHHHDFHEIVIVEHGTGIHVFNGQPYTISGGTVCFVRDHDRHLYEHTDNLCLTNVLWRSPDAFQFLAGLDQLLPQEQDGYYPSHWRVNQSVLQQVRQLVGLMERTGDGMDAPAVANREILFMQLLVLLRRSSLMEGATNNDAKLNQLMAWLEDHFAEEVCWEAVAEQFSLSLRTLHRQLKQHTGLTPQRYLNRLRLIKARHLLRHSDHSVTEIAYRCGFGDSNHFSTLFRREFNWSPRDIRQGRDAIIQ.

In terms of domain architecture, HTH araC/xylS-type spans 174 to 272 (NQLMAWLEDH…NWSPRDIRQG (99 aa)). DNA-binding regions (H-T-H motif) lie at residues 191-212 (EAVA…KQHT) and 239-262 (VTEI…RREF).

In terms of assembly, binds DNA as a dimer.

Its subcellular location is the cytoplasm. In terms of biological role, activates expression of the rhaBAD and rhaT operons. The polypeptide is HTH-type transcriptional activator RhaS (Salmonella heidelberg (strain SL476)).